Consider the following 657-residue polypeptide: Polycomb protein suz12-A (657 aa).

A disordered region spans residues 335-363; it reads TAPVAKPLATRNSESSTVDSSKTSNIKPP. Positions 347 to 358 are enriched in low complexity; sequence SESSTVDSSKTS. The C2H2-type zinc-finger motif lies at 413 to 436; that stretch reads LHCPWCTLNCRKLYSLLKHLKLSH. Residues 528–604 form a VEFS-box region; that stretch reads RLYFHSDSCT…NQMNQACMSF (77 aa).

It belongs to the VEFS (VRN2-EMF2-FIS2-SU(Z)12) family. As to quaternary structure, component of the prc2/eed-ezh2 complex.

It is found in the nucleus. In terms of biological role, polycomb group (PcG) protein. Component of the prc2/eed-ezh2 complex, which methylates 'Lys-9' and 'Lys-27' of histone H3, leading to transcriptional repression of the affected target gene. In Danio rerio (Zebrafish), this protein is Polycomb protein suz12-A (suz12a).